A 295-amino-acid chain; its full sequence is Enolase-phosphatase E1 (295 aa).

Mg(2+) contacts are provided by Asp-20 and Glu-22. Residues 153 to 154 and Lys-187 contribute to the substrate site; that span reads SS. Position 212 (Asp-212) interacts with Mg(2+). Residues 260-295 are disordered; that stretch reads ETKEENGGATNGKRKIEETNDDVAEEDKAQVYPNKK.

The protein belongs to the HAD-like hydrolase superfamily. MasA/MtnC family. Monomer. Mg(2+) serves as cofactor.

The protein resides in the cytoplasm. It is found in the nucleus. It carries out the reaction 5-methylsulfanyl-2,3-dioxopentyl phosphate + H2O = 1,2-dihydroxy-5-(methylsulfanyl)pent-1-en-3-one + phosphate. Its pathway is amino-acid biosynthesis; L-methionine biosynthesis via salvage pathway; L-methionine from S-methyl-5-thio-alpha-D-ribose 1-phosphate: step 3/6. It functions in the pathway amino-acid biosynthesis; L-methionine biosynthesis via salvage pathway; L-methionine from S-methyl-5-thio-alpha-D-ribose 1-phosphate: step 4/6. Its function is as follows. Bifunctional enzyme that catalyzes the enolization of 2,3-diketo-5-methylthiopentyl-1-phosphate (DK-MTP-1-P) into the intermediate 2-hydroxy-3-keto-5-methylthiopentenyl-1-phosphate (HK-MTPenyl-1-P), which is then dephosphorylated to form the acireductone 1,2-dihydroxy-3-keto-5-methylthiopentene (DHK-MTPene). The sequence is that of Enolase-phosphatase E1 from Anopheles gambiae (African malaria mosquito).